Here is a 460-residue protein sequence, read N- to C-terminus: MDSSWEASVTDSINAIYLLFSAYLVFVMQLGFAMLCAGSVRAKNAMNIMLTNVVDAVVGSLSYYLFGFAFAFGDSNPFIGASYFALKDIPSSSYDYSFFLYQWAFAIAVAGITSGSIAERTQFTAYLVFSFFLTGFVYPVVAHWLWSSNGWLSPNSTYLLFGSGAIDFAGSGVVHLVGGIAGFWGSIVEGPRVGRFDAFGNPVKMRGHNATLVVLGTLLLWFGWFGFNPGSFNKILVAYPHMADQGNWTSVGRTAVTTTLAGSTAGIVTLFGRRLLVGHWDAMDVCNGVLGGFVAITSGCSVVEPWAAILCGFCAAWVLIGLNILALKFKFDDPLEAAQLHGGCGAWGLIFTGLFAKEEFVLQAYNSGKTQIIRPSGLILGGGWGLFGAQIVELLSIVVWVSLTMGPLFYLLQKLGILRISSDEEVAGLDISSHGGYAYDASQEESNARFYGEYLRMQQQ.

The next 10 membrane-spanning stretches (helical) occupy residues 15 to 37, 50 to 72, 98 to 117, 124 to 146, 166 to 188, 209 to 227, 255 to 277, 305 to 327, 337 to 356, and 377 to 399; these read AIYL…MLCA, LTNV…AFAF, FFLY…SGSI, TAYL…HWLW, IDFA…GSIV, NATL…WFGF, AVTT…RLLV, PWAA…ILAL, AAQL…GLFA, and GLIL…SIVV.

Belongs to the ammonia transporter channel (TC 1.A.11.2) family. In terms of tissue distribution, leaves.

The protein resides in the membrane. Functionally, ammonium transporter that may be involved in ammonium transport throughout the plant. The sequence is that of Ammonium transporter 1 member 3 (AMT1-3) from Solanum lycopersicum (Tomato).